Here is a 130-residue protein sequence, read N- to C-terminus: Small ribosomal subunit protein uS11 (130 aa).

This sequence belongs to the universal ribosomal protein uS11 family. In terms of assembly, part of the 30S ribosomal subunit. Interacts with proteins S7 and S18. Binds to IF-3.

Functionally, located on the platform of the 30S subunit, it bridges several disparate RNA helices of the 16S rRNA. Forms part of the Shine-Dalgarno cleft in the 70S ribosome. The protein is Small ribosomal subunit protein uS11 of Shewanella baltica (strain OS223).